Consider the following 360-residue polypeptide: Coiled-coil domain-containing protein 86 (360 aa).

Residues 1–12 (MDTPLRRSRRLG) show a composition bias toward basic residues. Disordered stretches follow at residues 1–314 (MDTP…ENER) and 328–360 (LKRA…AAKI). S21, S24, S47, S50, and S58 each carry phosphoserine. Phosphothreonine is present on T65. Residues S66, S69, S80, S91, S102, S110, S113, and S128 each carry the phosphoserine modification. Polar residues predominate over residues 66–83 (SPGSPRLQQGSGLESPQG). Residues 153–164 (QLPPVPGSPEPY) are compositionally biased toward pro residues. Phosphoserine occurs at positions 188, 217, and 218. A compositionally biased stretch (basic residues) spans 238-254 (GKPKSGRVWKDRSKKRF). The stretch at 272–323 (KERQERKLAKDFARHLEEEKERRRQEKKQRRAENLKRRLENERKAEVVQVIR) forms a coiled coil. Composition is skewed to basic and acidic residues over residues 273–295 (ERQE…ERRR) and 302–314 (RAEN…ENER). Position 342 is a citrulline (R342).

Post-translationally, citrullinated by PADI4.

Its subcellular location is the nucleus. The protein resides in the chromosome. The protein localises to the nucleolus. Required for proper chromosome segregation during mitosis and error-free mitotic progression. This is Coiled-coil domain-containing protein 86 from Pongo abelii (Sumatran orangutan).